Consider the following 609-residue polypeptide: UvrABC system protein C (609 aa).

Positions 15–92 (TGSGVYQIQD…IKQFRPRYNV (78 aa)) constitute a GIY-YIG domain. Residues 202 to 237 (DQVIIKLTERMEVASENLVFEEAAHYRDQIRQLRRL) form the UVR domain.

It belongs to the UvrC family. In terms of assembly, interacts with UvrB in an incision complex.

Its subcellular location is the cytoplasm. Its function is as follows. The UvrABC repair system catalyzes the recognition and processing of DNA lesions. UvrC both incises the 5' and 3' sides of the lesion. The N-terminal half is responsible for the 3' incision and the C-terminal half is responsible for the 5' incision. This chain is UvrABC system protein C, found in Coxiella burnetii (strain Dugway 5J108-111).